We begin with the raw amino-acid sequence, 116 residues long: MAGFGLPNFGQLTEAFKKAKQIQQDAQKLQDELENMEIEGKSDDEMIKVWISGNQLPLKVEVQENILNADKEKIEKNILQAIQKAHESSTTTMKERMNDLTGGLNLNLPGFDNSDS.

This sequence belongs to the YbaB/EbfC family. As to quaternary structure, homodimer.

Its subcellular location is the cytoplasm. It localises to the nucleoid. Its function is as follows. Binds to DNA and alters its conformation. May be involved in regulation of gene expression, nucleoid organization and DNA protection. This Prochlorococcus marinus (strain MIT 9215) protein is Nucleoid-associated protein P9215_00191.